Reading from the N-terminus, the 80-residue chain is HssA/B-like protein 2 (80 aa).

The disordered stretch occupies residues 1-29; that stretch reads MSLLSALTSISKPMNTSSKSSVSSKNVSG. The segment covering 9–29 has biased composition (low complexity); the sequence is SISKPMNTSSKSSVSSKNVSG.

The protein belongs to the hssA/B family.

The protein is HssA/B-like protein 2 (hssl2) of Dictyostelium discoideum (Social amoeba).